The following is a 179-amino-acid chain: ATP synthase subunit delta (179 aa).

Belongs to the ATPase delta chain family. As to quaternary structure, F-type ATPases have 2 components, F(1) - the catalytic core - and F(0) - the membrane proton channel. F(1) has five subunits: alpha(3), beta(3), gamma(1), delta(1), epsilon(1). F(0) has three main subunits: a(1), b(2) and c(10-14). The alpha and beta chains form an alternating ring which encloses part of the gamma chain. F(1) is attached to F(0) by a central stalk formed by the gamma and epsilon chains, while a peripheral stalk is formed by the delta and b chains.

The protein localises to the cell inner membrane. In terms of biological role, f(1)F(0) ATP synthase produces ATP from ADP in the presence of a proton or sodium gradient. F-type ATPases consist of two structural domains, F(1) containing the extramembraneous catalytic core and F(0) containing the membrane proton channel, linked together by a central stalk and a peripheral stalk. During catalysis, ATP synthesis in the catalytic domain of F(1) is coupled via a rotary mechanism of the central stalk subunits to proton translocation. This protein is part of the stalk that links CF(0) to CF(1). It either transmits conformational changes from CF(0) to CF(1) or is implicated in proton conduction. The polypeptide is ATP synthase subunit delta (Polaromonas naphthalenivorans (strain CJ2)).